The chain runs to 227 residues: MAHPMQLGFQDAASPIMEELLYFHDHTLMIVFMISSLVLYIISLMLSTELTHTSTMDAQEVETVWTILPAVILILIALPSLRILYMMDEINTPSMTLKTMGHQWYWSYEYTDYDNLCFDSYMVTTPDLEPGDLRLLEVDNRVILPTEMSIRMLISSEDVLHSWTVPALGIKTDAIPGRLNQATLMTSRPGIYYGQCSEICGSNHSFMPIVLELVPLKYFEEWLLKSL.

Topologically, residues 1–14 (MAHPMQLGFQDAAS) are mitochondrial intermembrane. Residues 15–45 (PIMEELLYFHDHTLMIVFMISSLVLYIISLM) form a helical membrane-spanning segment. Residues 46–59 (LSTELTHTSTMDAQ) lie on the Mitochondrial matrix side of the membrane. A helical transmembrane segment spans residues 60-87 (EVETVWTILPAVILILIALPSLRILYMM). Over 88–227 (DEINTPSMTL…YFEEWLLKSL (140 aa)) the chain is Mitochondrial intermembrane. Cu cation contacts are provided by H161, C196, E198, C200, H204, and M207. E198 contributes to the Mg(2+) binding site. The residue at position 218 (Y218) is a Phosphotyrosine.

The protein belongs to the cytochrome c oxidase subunit 2 family. As to quaternary structure, component of the cytochrome c oxidase (complex IV, CIV), a multisubunit enzyme composed of 14 subunits. The complex is composed of a catalytic core of 3 subunits MT-CO1, MT-CO2 and MT-CO3, encoded in the mitochondrial DNA, and 11 supernumerary subunits COX4I, COX5A, COX5B, COX6A, COX6B, COX6C, COX7A, COX7B, COX7C, COX8 and NDUFA4, which are encoded in the nuclear genome. The complex exists as a monomer or a dimer and forms supercomplexes (SCs) in the inner mitochondrial membrane with NADH-ubiquinone oxidoreductase (complex I, CI) and ubiquinol-cytochrome c oxidoreductase (cytochrome b-c1 complex, complex III, CIII), resulting in different assemblies (supercomplex SCI(1)III(2)IV(1) and megacomplex MCI(2)III(2)IV(2)). Found in a complex with TMEM177, COA6, COX18, COX20, SCO1 and SCO2. Interacts with TMEM177 in a COX20-dependent manner. Interacts with COX20. Interacts with COX16. Cu cation serves as cofactor.

Its subcellular location is the mitochondrion inner membrane. It catalyses the reaction 4 Fe(II)-[cytochrome c] + O2 + 8 H(+)(in) = 4 Fe(III)-[cytochrome c] + 2 H2O + 4 H(+)(out). Its function is as follows. Component of the cytochrome c oxidase, the last enzyme in the mitochondrial electron transport chain which drives oxidative phosphorylation. The respiratory chain contains 3 multisubunit complexes succinate dehydrogenase (complex II, CII), ubiquinol-cytochrome c oxidoreductase (cytochrome b-c1 complex, complex III, CIII) and cytochrome c oxidase (complex IV, CIV), that cooperate to transfer electrons derived from NADH and succinate to molecular oxygen, creating an electrochemical gradient over the inner membrane that drives transmembrane transport and the ATP synthase. Cytochrome c oxidase is the component of the respiratory chain that catalyzes the reduction of oxygen to water. Electrons originating from reduced cytochrome c in the intermembrane space (IMS) are transferred via the dinuclear copper A center (CU(A)) of subunit 2 and heme A of subunit 1 to the active site in subunit 1, a binuclear center (BNC) formed by heme A3 and copper B (CU(B)). The BNC reduces molecular oxygen to 2 water molecules using 4 electrons from cytochrome c in the IMS and 4 protons from the mitochondrial matrix. In Nycticebus coucang (Slow loris), this protein is Cytochrome c oxidase subunit 2 (MT-CO2).